Reading from the N-terminus, the 576-residue chain is Arginine--tRNA ligase (576 aa).

Residues 123–133 (PNIGKEMHVGH) carry the 'HIGH' region motif.

Belongs to the class-I aminoacyl-tRNA synthetase family. As to quaternary structure, monomer.

It is found in the cytoplasm. It carries out the reaction tRNA(Arg) + L-arginine + ATP = L-arginyl-tRNA(Arg) + AMP + diphosphate. In Wigglesworthia glossinidia brevipalpis, this protein is Arginine--tRNA ligase.